We begin with the raw amino-acid sequence, 548 residues long: Glutamate--tRNA ligase (548 aa).

A 'HIGH' region motif is present at residues 102 to 112 (PSPSGPLHIGH).

The protein belongs to the class-I aminoacyl-tRNA synthetase family. Glutamate--tRNA ligase type 2 subfamily.

The protein resides in the cytoplasm. It catalyses the reaction tRNA(Glu) + L-glutamate + ATP = L-glutamyl-tRNA(Glu) + AMP + diphosphate. Its function is as follows. Catalyzes the attachment of glutamate to tRNA(Glu) in a two-step reaction: glutamate is first activated by ATP to form Glu-AMP and then transferred to the acceptor end of tRNA(Glu). The sequence is that of Glutamate--tRNA ligase from Thermoplasma acidophilum (strain ATCC 25905 / DSM 1728 / JCM 9062 / NBRC 15155 / AMRC-C165).